The sequence spans 253 residues: uncharacterized protein (253 aa).

It belongs to the herpesviridae BTRF1 family.

This is an uncharacterized protein from Saimiriine herpesvirus 2 (strain 11) (SaHV-2).